The primary structure comprises 177 residues: Peptidyl-tRNA hydrolase 1 (177 aa).

Residue Tyr-18 coordinates tRNA. His-23 serves as the catalytic Proton acceptor. Positions 65, 67, and 113 each coordinate tRNA.

It belongs to the PTH family. Monomer.

It localises to the cytoplasm. The enzyme catalyses an N-acyl-L-alpha-aminoacyl-tRNA + H2O = an N-acyl-L-amino acid + a tRNA + H(+). Functionally, hydrolyzes ribosome-free peptidyl-tRNAs (with 1 or more amino acids incorporated), which drop off the ribosome during protein synthesis, or as a result of ribosome stalling. Its function is as follows. Catalyzes the release of premature peptidyl moieties from peptidyl-tRNA molecules trapped in stalled 50S ribosomal subunits, and thus maintains levels of free tRNAs and 50S ribosomes. The chain is Peptidyl-tRNA hydrolase 1 from Corynebacterium glutamicum (strain ATCC 13032 / DSM 20300 / JCM 1318 / BCRC 11384 / CCUG 27702 / LMG 3730 / NBRC 12168 / NCIMB 10025 / NRRL B-2784 / 534).